A 321-amino-acid chain; its full sequence is Mitochondrial thiamine pyrophosphate carrier 1 (321 aa).

6 helical membrane-spanning segments follow: residues 12-28 (GTRRQVVLAGGIAGLVS), 91-107 (LMYVCYGVIQFSAYRTT), 126-146 (FVAGATAGGLATASTYPLDLL), 184-200 (AAVGQIVPYMGLFFATY), 221-237 (AAGVIASVSSKTVMFPL), and 284-301 (GLTVSLFKAAPASAVTMW). 3 Solcar repeats span residues 12-110 (GTRR…TTQA), 120-206 (PPSA…LRPP), and 214-309 (PFGS…SLRL).

It belongs to the mitochondrial carrier (TC 2.A.29) family.

The protein localises to the mitochondrion inner membrane. Mitochondrial transporter that mediates uptake of thiamine pyrophosphate (ThPP) into mitochondria. The sequence is that of Mitochondrial thiamine pyrophosphate carrier 1 (tpc1) from Aspergillus niger (strain ATCC MYA-4892 / CBS 513.88 / FGSC A1513).